The chain runs to 446 residues: High mobility group B protein 13 (446 aa).

2 disordered regions span residues 1-43 and 110-130; these read MSTV…TKSF and LAQTEEEKKGKKKKKDCAETK. The span at 11 to 22 shows a compositional bias: basic residues; sequence AKKSRNSRKALK. 2 consecutive DNA-binding regions (HMG box) follow at residues 129–197 and 246–312; these read TKRP…TKEK and PKQP…EGYK. Residues 349–371 are compositionally biased toward basic and acidic residues; it reads NIIKKTKETAKNKKKNENVDPNK. Positions 349–377 are disordered; sequence NIIKKTKETAKNKKKNENVDPNKPKKPTS. The HMG box 3 DNA-binding region spans 372–440; that stretch reads PKKPTSSYFL…AYKKEVEEYN (69 aa).

This sequence belongs to the HMGB family.

The protein localises to the nucleus. The polypeptide is High mobility group B protein 13 (HMGB13) (Arabidopsis thaliana (Mouse-ear cress)).